The following is a 445-amino-acid chain: Sodium/proton-dependent alanine carrier protein (445 aa).

9 helical membrane passes run 41 to 61, 103 to 123, 129 to 149, 159 to 179, 188 to 208, 249 to 269, 304 to 324, 349 to 369, and 375 to 395; these read IAYG…IGAA, AAII…SIAD, FGIP…FTIF, AEIV…AIIA, VFGL…GILG, AFSI…MILF, TLFP…FAFT, AFFA…VKTA, and MGDI…LLLF.

This sequence belongs to the alanine or glycine:cation symporter (AGCS) (TC 2.A.25) family. In terms of processing, the N-terminus is blocked.

It is found in the cell membrane. Mediates the active transport of alanine, driven by either an H(+) or Na(+) gradient. The chain is Sodium/proton-dependent alanine carrier protein from Bacillus sp. (strain PS3).